Reading from the N-terminus, the 218-residue chain is Cell division protein SepF (218 aa).

The interval 25-115 (DVAASTDNVI…IANRREQYQQ (91 aa)) is disordered. Positions 29–43 (STDNVIPRSQQSVRA) are enriched in polar residues. Over residues 47–63 (PKQEPRNNHVQQDHQAR) the composition is skewed to basic and acidic residues. The span at 102-115 (STSSIANRREQYQQ) shows a compositional bias: polar residues.

This sequence belongs to the SepF family. Homodimer. Interacts with FtsZ.

The protein localises to the cytoplasm. Cell division protein that is part of the divisome complex and is recruited early to the Z-ring. Probably stimulates Z-ring formation, perhaps through the cross-linking of FtsZ protofilaments. Its function overlaps with FtsA. The protein is Cell division protein SepF of Streptococcus pyogenes serotype M5 (strain Manfredo).